The chain runs to 147 residues: Protein MGF 100-3L (147 aa).

Belongs to the asfivirus MGF 100 family.

Its function is as follows. Plays a role in virus cell tropism, and may be required for efficient virus replication in macrophages. The polypeptide is Protein MGF 100-3L (African swine fever virus (isolate Tick/Malawi/Lil 20-1/1983) (ASFV)).